The following is an 88-amino-acid chain: Putative regulatory protein DvMF_1139 (88 aa).

This sequence belongs to the RemA family.

The polypeptide is Putative regulatory protein DvMF_1139 (Nitratidesulfovibrio vulgaris (strain DSM 19637 / Miyazaki F) (Desulfovibrio vulgaris)).